The following is a 383-amino-acid chain: Queuine tRNA-ribosyltransferase (383 aa).

Aspartate 92 functions as the Proton acceptor in the catalytic mechanism. Substrate contacts are provided by residues 92–96 (DSGGF), aspartate 146, glutamine 190, and glycine 217. Positions 248 to 254 (GVGKPED) are RNA binding. The active-site Nucleophile is the aspartate 267. The tract at residues 272 to 276 (TRNAR) is RNA binding; important for wobble base 34 recognition. Residues cysteine 310, cysteine 312, cysteine 315, and histidine 341 each contribute to the Zn(2+) site.

It belongs to the queuine tRNA-ribosyltransferase family. Homodimer. Within each dimer, one monomer is responsible for RNA recognition and catalysis, while the other monomer binds to the replacement base PreQ1. Zn(2+) serves as cofactor.

It carries out the reaction 7-aminomethyl-7-carbaguanine + guanosine(34) in tRNA = 7-aminomethyl-7-carbaguanosine(34) in tRNA + guanine. It functions in the pathway tRNA modification; tRNA-queuosine biosynthesis. Catalyzes the base-exchange of a guanine (G) residue with the queuine precursor 7-aminomethyl-7-deazaguanine (PreQ1) at position 34 (anticodon wobble position) in tRNAs with GU(N) anticodons (tRNA-Asp, -Asn, -His and -Tyr). Catalysis occurs through a double-displacement mechanism. The nucleophile active site attacks the C1' of nucleotide 34 to detach the guanine base from the RNA, forming a covalent enzyme-RNA intermediate. The proton acceptor active site deprotonates the incoming PreQ1, allowing a nucleophilic attack on the C1' of the ribose to form the product. After dissociation, two additional enzymatic reactions on the tRNA convert PreQ1 to queuine (Q), resulting in the hypermodified nucleoside queuosine (7-(((4,5-cis-dihydroxy-2-cyclopenten-1-yl)amino)methyl)-7-deazaguanosine). The sequence is that of Queuine tRNA-ribosyltransferase from Psychrobacter sp. (strain PRwf-1).